The sequence spans 545 residues: Chromosomal replication initiator protein DnaA (545 aa).

The domain I, interacts with DnaA modulators stretch occupies residues 1–72; it reads MNDFWQHCSA…DMARDFWQAP (72 aa). Residues 72-208 form a domain II region; it reads PVDVQFVLDP…GETDSMYERS (137 aa). A compositionally biased stretch (low complexity) spans 90-105; the sequence is AAAPAPASARPASAPG. Disordered stretches follow at residues 90-112 and 181-204; these read AAAP…GSAG and AAAR…TDSM. Residues 189–201 are compositionally biased toward polar residues; that stretch reads PGQSASSNGNGET. A domain III, AAA+ region region spans residues 209 to 425; sequence KLNPVLTFDN…GALRKILAYS (217 aa). The ATP site is built by glycine 253, glycine 255, lysine 256, and threonine 257. A domain IV, binds dsDNA region spans residues 426–545; that stretch reads KFHGREITIE…LHVLEQTLKG (120 aa).

This sequence belongs to the DnaA family. Oligomerizes as a right-handed, spiral filament on DNA at oriC.

It is found in the cytoplasm. In terms of biological role, plays an essential role in the initiation and regulation of chromosomal replication. ATP-DnaA binds to the origin of replication (oriC) to initiate formation of the DNA replication initiation complex once per cell cycle. Binds the DnaA box (a 9 base pair repeat at the origin) and separates the double-stranded (ds)DNA. Forms a right-handed helical filament on oriC DNA; dsDNA binds to the exterior of the filament while single-stranded (ss)DNA is stabiized in the filament's interior. The ATP-DnaA-oriC complex binds and stabilizes one strand of the AT-rich DNA unwinding element (DUE), permitting loading of DNA polymerase. After initiation quickly degrades to an ADP-DnaA complex that is not apt for DNA replication. Binds acidic phospholipids. This is Chromosomal replication initiator protein DnaA from Paraburkholderia phytofirmans (strain DSM 17436 / LMG 22146 / PsJN) (Burkholderia phytofirmans).